The following is a 156-amino-acid chain: ATP synthase subunit b (156 aa).

The chain crosses the membrane as a helical span at residues 7-29 (LFAQMVVFLVLAWFTMKFVWPPL).

The protein belongs to the ATPase B chain family. As to quaternary structure, F-type ATPases have 2 components, F(1) - the catalytic core - and F(0) - the membrane proton channel. F(1) has five subunits: alpha(3), beta(3), gamma(1), delta(1), epsilon(1). F(0) has three main subunits: a(1), b(2) and c(10-14). The alpha and beta chains form an alternating ring which encloses part of the gamma chain. F(1) is attached to F(0) by a central stalk formed by the gamma and epsilon chains, while a peripheral stalk is formed by the delta and b chains.

The protein localises to the cell inner membrane. F(1)F(0) ATP synthase produces ATP from ADP in the presence of a proton or sodium gradient. F-type ATPases consist of two structural domains, F(1) containing the extramembraneous catalytic core and F(0) containing the membrane proton channel, linked together by a central stalk and a peripheral stalk. During catalysis, ATP synthesis in the catalytic domain of F(1) is coupled via a rotary mechanism of the central stalk subunits to proton translocation. In terms of biological role, component of the F(0) channel, it forms part of the peripheral stalk, linking F(1) to F(0). The protein is ATP synthase subunit b of Burkholderia cenocepacia (strain ATCC BAA-245 / DSM 16553 / LMG 16656 / NCTC 13227 / J2315 / CF5610) (Burkholderia cepacia (strain J2315)).